Here is a 131-residue protein sequence, read N- to C-terminus: Profilin-9 (131 aa).

The cysteines at positions 13 and 115 are disulfide-linked. The Involved in PIP2 interaction motif lies at 81–97; sequence AVTRGKKGAGGITIKKT. Thr-111 is modified (phosphothreonine).

This sequence belongs to the profilin family. In terms of assembly, occurs in many kinds of cells as a complex with monomeric actin in a 1:1 ratio. Phosphorylated by MAP kinases.

The protein resides in the cytoplasm. The protein localises to the cytoskeleton. Functionally, binds to actin and affects the structure of the cytoskeleton. At high concentrations, profilin prevents the polymerization of actin, whereas it enhances it at low concentrations. The protein is Profilin-9 of Phleum pratense (Common timothy).